The sequence spans 253 residues: MSVSVRVIPCLDVANGRVVKGVNFKNLRDAGDPVELAKRYDEEGADELTFLDVSASKEGRGTMLDVVRRTADQIFIPLTVGGGVRSVEDADALLRAGADKVSVNSSAVANPELLRELSTCFGAQCVVLSVDARRCDDQPSGYEVTTHGGTKSAGLDAVAWAKKGEELGVGEILLNSMDADGTKDGFDTEMLAAVREVVSIPVIASGGAGKASHFPPAVAAGANAVLAASIFHFGEVSIREVKDALGQDYEVRR.

Residues Asp12 and Asp131 contribute to the active site.

The protein belongs to the HisA/HisF family. As to quaternary structure, heterodimer of HisH and HisF.

The protein localises to the cytoplasm. The enzyme catalyses 5-[(5-phospho-1-deoxy-D-ribulos-1-ylimino)methylamino]-1-(5-phospho-beta-D-ribosyl)imidazole-4-carboxamide + L-glutamine = D-erythro-1-(imidazol-4-yl)glycerol 3-phosphate + 5-amino-1-(5-phospho-beta-D-ribosyl)imidazole-4-carboxamide + L-glutamate + H(+). It participates in amino-acid biosynthesis; L-histidine biosynthesis; L-histidine from 5-phospho-alpha-D-ribose 1-diphosphate: step 5/9. Its function is as follows. IGPS catalyzes the conversion of PRFAR and glutamine to IGP, AICAR and glutamate. The HisF subunit catalyzes the cyclization activity that produces IGP and AICAR from PRFAR using the ammonia provided by the HisH subunit. The chain is Imidazole glycerol phosphate synthase subunit HisF from Corynebacterium urealyticum (strain ATCC 43042 / DSM 7109).